The sequence spans 201 residues: Prostamide/prostaglandin F synthase (201 aa).

This sequence belongs to the peroxiredoxin-like PRXL2 family. Prostamide/prostaglandin F synthase subfamily.

Its subcellular location is the cytoplasm. It localises to the cytosol. The catalysed reaction is prostaglandin H2 + [thioredoxin]-dithiol = prostaglandin F2alpha + [thioredoxin]-disulfide. It carries out the reaction prostamide F2alpha + [thioredoxin]-disulfide = prostamide H2 + [thioredoxin]-dithiol. Catalyzes the reduction of prostaglandin-ethanolamide H(2) (prostamide H(2)) to prostamide F(2alpha) with NADPH as proton donor. Also able to reduce prostaglandin H(2) to prostaglandin F(2alpha). This chain is Prostamide/prostaglandin F synthase (prxl2b), found in Aquarana catesbeiana (American bullfrog).